A 435-amino-acid chain; its full sequence is Acetylcholine receptor-like protein cup-4 (435 aa).

Residues 1 to 24 form the signal peptide; sequence MRLLLIFTVIFVFYLAILKRDVNA. N-linked (GlcNAc...) asparagine glycosylation is found at Asn41, Asn68, Asn237, and Asn249. Transmembrane regions (helical) follow at residues 298–318 and 341–361; these read VSFF…AIYL and ITLF…HGVL. The N-linked (GlcNAc...) asparagine glycan is linked to Asn403. A helical transmembrane segment spans residues 413-433; sequence PLAGLAMFVYFVIMFILYLVV.

Belongs to the ligand-gated ion channel (TC 1.A.9) family. Acetylcholine receptor (TC 1.A.9.1) subfamily.

Its subcellular location is the cytoplasmic vesicle membrane. Thought to regulate endocytosis in coelomocytes through modulation of phospholipase C activity. Possible acetylcholine receptor. The sequence is that of Acetylcholine receptor-like protein cup-4 from Caenorhabditis briggsae.